Here is a 763-residue protein sequence, read N- to C-terminus: Autophagy-related protein 18f (763 aa).

WD repeat units lie at residues 345-385 (AHKS…STSR) and 402-441 (FTNA…EGDA). The segment covering 701 to 711 (NESIQSPSTTT) has biased composition (polar residues). The segment at 701-763 (NESIQSPSTT…SEDEDEEQVD (63 aa)) is disordered. Basic and acidic residues-rich tracts occupy residues 712-725 (QDDK…HGTE) and 741-754 (PVDK…KNHS).

This sequence belongs to the WD repeat PROPPIN family. As to quaternary structure, component of the PI(3,5)P2 regulatory complex at least composed of ATG18, SAC/FIG4, FAB1 and VAC14. Expressed in roots, flowers and leaves.

It localises to the preautophagosomal structure membrane. It is found in the vacuole membrane. In terms of biological role, the PI(3,5)P2 regulatory complex regulates both the synthesis and turnover of phosphatidylinositol 3,5-bisphosphate (PtdIns(3,5)P2). Required for autophagy. In Arabidopsis thaliana (Mouse-ear cress), this protein is Autophagy-related protein 18f (ATG18F).